Consider the following 162-residue polypeptide: Large ribosomal subunit protein bL17 (162 aa).

Basic and acidic residues predominate over residues 125–140 (AAKEAPAKEVAEEKAA). The disordered stretch occupies residues 125–162 (AAKEAPAKEVAEEKAAKPAKKAAPKKAEKEEAEDAAEA).

The protein belongs to the bacterial ribosomal protein bL17 family. Part of the 50S ribosomal subunit. Contacts protein L32.

The sequence is that of Large ribosomal subunit protein bL17 from Oleidesulfovibrio alaskensis (strain ATCC BAA-1058 / DSM 17464 / G20) (Desulfovibrio alaskensis).